Consider the following 83-residue polypeptide: Toxin Aam1 (83 aa).

An N-terminal signal peptide occupies residues 1–19 (MNYLVMISLALLLMIGVES). The region spanning 21–82 (RDGYIVYPHN…PIYDRSYKCY (62 aa)) is the LCN-type CS-alpha/beta domain. 4 disulfide bridges follow: C31–C81, C35–C53, C39–C63, and C43–C65.

Belongs to the long (4 C-C) scorpion toxin superfamily. Sodium channel inhibitor family. Alpha subfamily. The C-terminal basic residue is removed by a carboxypeptidase. Expressed by the venom gland.

The protein localises to the secreted. In terms of biological role, alpha toxins bind voltage-independently at site-3 of sodium channels (Nav) and inhibit the inactivation of the activated channels, thereby blocking neuronal transmission. This Androctonus amoreuxi (African fattail scorpion) protein is Toxin Aam1 (H1).